A 245-amino-acid chain; its full sequence is Malonyl-[acyl-carrier protein] O-methyltransferase (245 aa).

The protein belongs to the methyltransferase superfamily.

It carries out the reaction malonyl-[ACP] + S-adenosyl-L-methionine = malonyl-[ACP] methyl ester + S-adenosyl-L-homocysteine. Its pathway is cofactor biosynthesis; biotin biosynthesis. In terms of biological role, converts the free carboxyl group of a malonyl-thioester to its methyl ester by transfer of a methyl group from S-adenosyl-L-methionine (SAM). It allows to synthesize pimeloyl-ACP via the fatty acid synthetic pathway. This chain is Malonyl-[acyl-carrier protein] O-methyltransferase, found in Calditerrivibrio nitroreducens (strain DSM 19672 / NBRC 101217 / Yu37-1).